A 500-amino-acid polypeptide reads, in one-letter code: Glycerol kinase (500 aa).

Threonine 12 contributes to the ADP binding site. 3 residues coordinate ATP: threonine 12, threonine 13, and serine 14. Threonine 12 serves as a coordination point for sn-glycerol 3-phosphate. Position 16 (arginine 16) interacts with ADP. 4 residues coordinate sn-glycerol 3-phosphate: arginine 82, glutamate 83, tyrosine 134, and aspartate 246. Glycerol-binding residues include arginine 82, glutamate 83, tyrosine 134, aspartate 246, and glutamine 247. ADP is bound by residues threonine 268 and glycine 312. ATP contacts are provided by threonine 268, glycine 312, glutamine 316, and glycine 413. 2 residues coordinate ADP: glycine 413 and asparagine 417.

Belongs to the FGGY kinase family.

It carries out the reaction glycerol + ATP = sn-glycerol 3-phosphate + ADP + H(+). Its pathway is polyol metabolism; glycerol degradation via glycerol kinase pathway; sn-glycerol 3-phosphate from glycerol: step 1/1. Its activity is regulated as follows. Inhibited by fructose 1,6-bisphosphate (FBP). In terms of biological role, key enzyme in the regulation of glycerol uptake and metabolism. Catalyzes the phosphorylation of glycerol to yield sn-glycerol 3-phosphate. This is Glycerol kinase from Saccharopolyspora erythraea (strain ATCC 11635 / DSM 40517 / JCM 4748 / NBRC 13426 / NCIMB 8594 / NRRL 2338).